We begin with the raw amino-acid sequence, 147 residues long: Male-specific protein scotti (147 aa).

The interval 55-93 (PQEPPLGVFPAQGGPNGPPRRRKKRSFYTMTKPTPPCQS) is disordered. Residues 82 to 93 (YTMTKPTPPCQS) are compositionally biased toward polar residues. Asn128 carries an N-linked (GlcNAc...) asparagine glycan.

This sequence belongs to the male-specific scotti family. Expressed in primary spermatocytes and round spermatids. Low expression is seen in very short elongating cysts, but were detected at high levels in a few longer spermatid cysts.

In terms of biological role, post-meiotically transcribed gene that has a role in late spermiogenesis; required for actin cone progression during spermatid individualization. The protein is Male-specific protein scotti of Drosophila melanogaster (Fruit fly).